Reading from the N-terminus, the 362-residue chain is 3-dehydroquinate synthase (362 aa).

Residues 73 to 78 (DAEAGK), 107 to 111 (GAATD), 131 to 132 (TT), lysine 144, lysine 153, and 171 to 174 (TLQT) contribute to the NAD(+) site. Zn(2+) is bound by residues glutamate 186, histidine 249, and histidine 265.

It belongs to the sugar phosphate cyclases superfamily. Dehydroquinate synthase family. The cofactor is NAD(+). Requires Co(2+) as cofactor. Zn(2+) serves as cofactor.

It is found in the cytoplasm. It catalyses the reaction 7-phospho-2-dehydro-3-deoxy-D-arabino-heptonate = 3-dehydroquinate + phosphate. The protein operates within metabolic intermediate biosynthesis; chorismate biosynthesis; chorismate from D-erythrose 4-phosphate and phosphoenolpyruvate: step 2/7. Its function is as follows. Catalyzes the conversion of 3-deoxy-D-arabino-heptulosonate 7-phosphate (DAHP) to dehydroquinate (DHQ). This chain is 3-dehydroquinate synthase, found in Mycobacterium bovis (strain ATCC BAA-935 / AF2122/97).